The primary structure comprises 210 residues: Peptidyl-tRNA hydrolase (210 aa).

TRNA is bound at residue Tyr14. Catalysis depends on His19, which acts as the Proton acceptor. TRNA is bound by residues Phe64, Asn66, and Asn112.

It belongs to the PTH family. In terms of assembly, monomer.

Its subcellular location is the cytoplasm. It carries out the reaction an N-acyl-L-alpha-aminoacyl-tRNA + H2O = an N-acyl-L-amino acid + a tRNA + H(+). Hydrolyzes ribosome-free peptidyl-tRNAs (with 1 or more amino acids incorporated), which drop off the ribosome during protein synthesis, or as a result of ribosome stalling. Functionally, catalyzes the release of premature peptidyl moieties from peptidyl-tRNA molecules trapped in stalled 50S ribosomal subunits, and thus maintains levels of free tRNAs and 50S ribosomes. In Methylorubrum populi (strain ATCC BAA-705 / NCIMB 13946 / BJ001) (Methylobacterium populi), this protein is Peptidyl-tRNA hydrolase.